The sequence spans 520 residues: Putative cytochrome P450 CYP13A3 (520 aa).

Cysteine 464 contacts heme.

Belongs to the cytochrome P450 family. The cofactor is heme.

Cytochromes P450 are a group of heme-thiolate monooxygenases. They oxidize a variety of structurally unrelated compounds, including steroids, fatty acids, and xenobiotics. This is Putative cytochrome P450 CYP13A3 (cyp-13A3) from Caenorhabditis elegans.